Consider the following 303-residue polypeptide: MENSKIHFSYPLDKSDFKLIEPYTYICESSGKGFRNALIKSFDYWLKVGDEKVQDISKVIQGLHGASLLIDDIEDNSKLRRGKPVAHSIYGIPQTINSANFVYFLIMDQCNKLGDPKATTIFIEELIRLHRGQGYDIFWRDTNTSPSEQEYMNMVNEKTGGLFRLGLRLLQAFSDNNTNYIDLVEDLGMYYQIRDDLINLVSVDYQQNKSFCEDISEGKFSFPIIHAINADSNDNRLLRILKQKTEDRSVKEHALEYIKSKGSLEYTEKKLNVLKEKIIKQINDLGGNPILMKLMESLENSSI.

Isopentenyl diphosphate contacts are provided by K32, R35, and H64. 2 residues coordinate Mg(2+): D71 and D75. Position 80 (R80) interacts with dimethylallyl diphosphate. Position 81 (R81) interacts with isopentenyl diphosphate. K158, T159, Q192, K209, and K219 together coordinate dimethylallyl diphosphate.

Belongs to the FPP/GGPP synthase family. Homooligomer. Requires Mg(2+) as cofactor.

It localises to the cytoplasm. The enzyme catalyses isopentenyl diphosphate + dimethylallyl diphosphate = (2E)-geranyl diphosphate + diphosphate. The catalysed reaction is isopentenyl diphosphate + (2E)-geranyl diphosphate = (2E,6E)-farnesyl diphosphate + diphosphate. It catalyses the reaction isopentenyl diphosphate + (2E,6E)-farnesyl diphosphate = (2E,6E,10E)-geranylgeranyl diphosphate + diphosphate. It participates in isoprenoid biosynthesis; farnesyl diphosphate biosynthesis; farnesyl diphosphate from geranyl diphosphate and isopentenyl diphosphate: step 1/1. It functions in the pathway isoprenoid biosynthesis; geranyl diphosphate biosynthesis; geranyl diphosphate from dimethylallyl diphosphate and isopentenyl diphosphate: step 1/1. The protein operates within isoprenoid biosynthesis; geranylgeranyl diphosphate biosynthesis; geranylgeranyl diphosphate from farnesyl diphosphate and isopentenyl diphosphate: step 1/1. Functionally, catalyzes the trans-addition of the three molecules of IPP onto DMAPP to form geranylgeranyl pyrophosphate, an important precursor of carotenoids and geranylated proteins. The protein is Geranylgeranyl pyrophosphate synthase (ggps1) of Dictyostelium discoideum (Social amoeba).